We begin with the raw amino-acid sequence, 636 residues long: Fructose-1,6-bisphosphatase class 3 (636 aa).

Belongs to the FBPase class 3 family. Requires Mn(2+) as cofactor.

The catalysed reaction is beta-D-fructose 1,6-bisphosphate + H2O = beta-D-fructose 6-phosphate + phosphate. The protein operates within carbohydrate biosynthesis; gluconeogenesis. This is Fructose-1,6-bisphosphatase class 3 from Streptococcus sanguinis (strain SK36).